Consider the following 116-residue polypeptide: U16-barytoxin-Tl1b (116 aa).

An N-terminal signal peptide occupies residues 1-20 (MKTIIVFLSLLVLATKFGDA). The propeptide occupies 21 to 74 (KEGVNQKQKKEVTQNEFREEYLNEMAAMSLVQQLEAIERALFENEAGRNSRQKR). Intrachain disulfides connect cysteine 75–cysteine 90, cysteine 82–cysteine 95, and cysteine 89–cysteine 110.

It belongs to the neurotoxin 14 (magi-1) family. 06 (ICK-Trit) subfamily. Expressed by the venom gland.

It is found in the secreted. Ion channel inhibitor. The chain is U16-barytoxin-Tl1b from Trittame loki (Brush-footed trapdoor spider).